Reading from the N-terminus, the 208-residue chain is Uracil phosphoribosyltransferase (208 aa).

Residues Arg78, Arg103, and 130–138 each bind 5-phospho-alpha-D-ribose 1-diphosphate; that span reads DPMLATGGS. Uracil contacts are provided by residues Ile193 and 198–200; that span reads GDA. 5-phospho-alpha-D-ribose 1-diphosphate is bound at residue Asp199.

Belongs to the UPRTase family. Requires Mg(2+) as cofactor.

It catalyses the reaction UMP + diphosphate = 5-phospho-alpha-D-ribose 1-diphosphate + uracil. The protein operates within pyrimidine metabolism; UMP biosynthesis via salvage pathway; UMP from uracil: step 1/1. Allosterically activated by GTP. Functionally, catalyzes the conversion of uracil and 5-phospho-alpha-D-ribose 1-diphosphate (PRPP) to UMP and diphosphate. The chain is Uracil phosphoribosyltransferase from Escherichia coli O139:H28 (strain E24377A / ETEC).